Consider the following 869-residue polypeptide: Phosphatidylethanolamine N-methyltransferase (869 aa).

N-acetylserine is present on S2. The Lumenal portion of the chain corresponds to 2-55 (SSCKTTLSEMVGSVTKDRGTINVEARTRSSNVTFKPPVTHDMVRSLFDPTLKKS). A helical membrane pass occupies residues 56–76 (LLEKCIALAIISNFFICYWVF). The Cytoplasmic segment spans residues 77–86 (QRFGLQFTKY). Residues 87-107 (FFLVQYLFWRIAYNLGIGLVL) form a helical membrane-spanning segment. The Lumenal segment spans residues 108–187 (HYQSHYETLT…EINVWLIFRQ (80 aa)). Residues 188–208 (FVDLILMQDFVTYIIYVYLSI) form a helical membrane-spanning segment. The Cytoplasmic segment spans residues 209 to 212 (PYSW). A helical transmembrane segment spans residues 213 to 233 (VQIFNWRSLLGVILILFNIWV). Topologically, residues 234-258 (KLDAHRVVKDYAWYWGDFFFLEESE) are lumenal. Residues 259–279 (LIFDGVFNISPHPMYSIGYLG) traverse the membrane as a helical segment. Over 280–291 (YYGLSLICNDYK) the chain is Cytoplasmic. The chain crosses the membrane as a helical span at residues 292–310 (VLLVSVFGHYSQFLFLKYV). Over 311 to 362 (ENPHIERTYGDGTDSDSQMNSRIDDLISKENYDYSRPLINMGLSFNNFNKLR) the chain is Lumenal. Residues 363–383 (FTDYFTIGTVAALMLGTIMNA) form a helical membrane-spanning segment. Residues 384 to 389 (RFINLN) are Cytoplasmic-facing. A helical membrane pass occupies residues 390-410 (YLFITVFVTKLVSWLFISTIL). Topologically, residues 411-439 (YKQSQSKWFTRLFLENGYTQVYSYEQWQF) are lumenal. Residues 440 to 460 (IYNYYLVLTYTLMIIHTGLQI) traverse the membrane as a helical segment. The Cytoplasmic segment spans residues 461-463 (WSN). Residues 464 to 484 (FSNINNSQLIFGLILVALQTW) traverse the membrane as a helical segment. At 485-534 (CDKETRLAISDFGWFYGDFFLSNYISTRKLTSQGIYRYLNHPEAVLGVVG) the chain is on the lumenal side. Residues 535–555 (VWGTVLMTNFAVTNIILAVLW) form a helical membrane-spanning segment. The Cytoplasmic segment spans residues 556–869 (TLTNFILVKF…DIKQTLDSLA (314 aa)).

It belongs to the class VI-like SAM-binding methyltransferase superfamily. CHO2 family.

It is found in the endoplasmic reticulum membrane. The enzyme catalyses a 1,2-diacyl-sn-glycero-3-phosphoethanolamine + S-adenosyl-L-methionine = a 1,2-diacyl-sn-glycero-3-phospho-N-methylethanolamine + S-adenosyl-L-homocysteine + H(+). Its pathway is phospholipid metabolism; phosphatidylcholine biosynthesis. Its function is as follows. Catalyzes the first step of the methylation pathway of phosphatidylcholine biosynthesis, the SAM-dependent methylation of phosphatidylethanolamine (PE) to phosphatidylmonomethylethanolamine (PMME). Preferentially converts di-C16:1 substrates. The chain is Phosphatidylethanolamine N-methyltransferase from Saccharomyces cerevisiae (strain ATCC 204508 / S288c) (Baker's yeast).